A 1341-amino-acid chain; its full sequence is MVYSYTEKKRIRKDFGKRPQVLDIPYLLSIQIDSFQKFIKQDPEEPCGLEAAFRSVFPIKSYNGNAELQYIKYQLGEPTFDVKECQTRGATFSAPLRVRLCLIIYEREGLNNIIKNTKEQEVYMGEIPLMTNNGTFIINGIERVIVSQLHRSPGVFFDSDKGKTHSSGKVLYNARIIPYRGSWLDFEFDLKDNLFVRIDRRRKLPVTVILRALNYTTDQILNIFFNKVIYEIQNNTLYMHLIPERLRGETASFDIAVNGVIYVKKGRRIAAKHIRQLKKDKISKIEVPMDYIIGKVVIKDYFDKNTNIPIVTANTEISSDILHNLIRSGYESIETLFSNDLDYGNYISETLRIDATTNKFDALVEIYRVMRPGEPPTKEAAEYLFENLFFSEERYDLSSVGRMKFNRSLQRVQIEDLGTLKKDDIVDVIKKLIDIRNGKGEVDDIDHLGNRRIRSVGEMAENQFRIGLVRVERAVKERLSLGDLDVLTPQDLINAKPISAAVREFFTSSQLSQFMDQNNPLSEITHKRRISALGPGGLTRERAGFEVRDVHPTHYGRVCPIETPEGPNIGLINSLSVYARANKYGFLETPYRKVQNGVVSNDIHYLSAIEEGDFVIAQANTNLNSIGEFIDDLVTCRNKGESGLFKKDQVDYMDVSTQQIVSVAASLIPFLEHDDANRALMGANMQRQAVPVLCSEKPLVGTGMERAVAIDSGVTVVAKRGGVIKYVDASRIVIHVNKNETHTEESGIDIYQLTKYIRSNQNTCINQRPCVSLGELVEHGDVIADGPSTDLGELALGQNMRIAFMPWNGYNFEDSMLVSERVVQEDKFTSIHIQELTCVSRDTKLGPEEITADIPNVGETALSKLDESGIIYIGAEVIGGDILVGKVTPKGETQLTPEEKLLRAIFGEKASDVKDSSLRVPNGVCGTVIDVQIFTRDGINKDKRSLIIESEKLKQVKKDLSEELQIFESALFDRVCDVLMTSGIDKKKLFETSRNAWLDLVLSDPEKQYQLSQLTKQYFDLKRMFEKKLEIQHRKITQGDELAPGILKIVKVYLAVKRQIQPGDKMAGRHGNKGVISKINPIEDMPYDQHGIPVDIVLNPLGVPSRMNIGQILETHLGMAAKGIGDKINFMLQQHKEANQLRRFMQQAYNLGEGSRQHINLNSFSDIEILKLAKNLKKGMPIATPVFDGATEKEIKDLLKLSGLPSSGQITLFDGCTGEAFERQVTVGYMYMLKLNHLVDDKMHARSTGSYSLVTQQPLGGKAQFGGQRFGEMEVWALEAYGASYTLQEMLTVKSDDVNGRTKMYKNIVDGNHMMEPGMPESFNVLLKEIRSLAINIELED.

The protein belongs to the RNA polymerase beta chain family. The RNAP catalytic core consists of 2 alpha, 1 beta, 1 beta' and 1 omega subunit. When a sigma factor is associated with the core the holoenzyme is formed, which can initiate transcription.

The catalysed reaction is RNA(n) + a ribonucleoside 5'-triphosphate = RNA(n+1) + diphosphate. Its function is as follows. DNA-dependent RNA polymerase catalyzes the transcription of DNA into RNA using the four ribonucleoside triphosphates as substrates. In Blochmanniella pennsylvanica (strain BPEN), this protein is DNA-directed RNA polymerase subunit beta.